The sequence spans 456 residues: ATP synthase subunit beta (456 aa).

135–142 (GGAGVGKT) is a binding site for ATP.

Belongs to the ATPase alpha/beta chains family. In terms of assembly, F-type ATPases have 2 components, CF(1) - the catalytic core - and CF(0) - the membrane proton channel. CF(1) has five subunits: alpha(3), beta(3), gamma(1), delta(1), epsilon(1). CF(0) has four main subunits: a(1), b(1), b'(1) and c(9-12).

It localises to the cellular thylakoid membrane. The catalysed reaction is ATP + H2O + 4 H(+)(in) = ADP + phosphate + 5 H(+)(out). Its function is as follows. Produces ATP from ADP in the presence of a proton gradient across the membrane. The catalytic sites are hosted primarily by the beta subunits. The polypeptide is ATP synthase subunit beta (atpD) (Acaryochloris marina (strain MBIC 11017)).